The primary structure comprises 145 residues: MAGRKGGDRKKAVTRSVKAGLQFPVGRIGRYLKKGRYAQRVGSGAPVYLAAVLEYLAAEVLELAGNAAKDNKKTRIIPRHLLLAVRNDQELGRLLAGVTIAHGGVIPNINSVLLPKKSPAAAEKEAKSQKAAAKSPKKKTAATKE.

Positions 118–145 (SPAAAEKEAKSQKAAAKSPKKKTAATKE) are disordered. Positions 135–138 (SPKK) match the SPKK motif motif. The span at 135-145 (SPKKKTAATKE) shows a compositional bias: basic residues.

It belongs to the histone H2A family. As to quaternary structure, the nucleosome is a histone octamer containing two molecules each of H2A, H2B, H3 and H4 assembled in one H3-H4 heterotetramer and two H2A-H2B heterodimers. The octamer wraps approximately 147 bp of DNA. Abundant in meristematic tissues.

The protein localises to the nucleus. It localises to the chromosome. Functionally, core component of nucleosome. Nucleosomes wrap and compact DNA into chromatin, limiting DNA accessibility to the cellular machineries which require DNA as a template. Histones thereby play a central role in transcription regulation, DNA repair, DNA replication and chromosomal stability. DNA accessibility is regulated via a complex set of post-translational modifications of histones, also called histone code, and nucleosome remodeling. The polypeptide is Protein H2A.5 (H2A-2) (Triticum aestivum (Wheat)).